Reading from the N-terminus, the 476-residue chain is Proline--tRNA ligase (476 aa).

The protein belongs to the class-II aminoacyl-tRNA synthetase family. ProS type 3 subfamily. Homodimer.

It is found in the cytoplasm. It carries out the reaction tRNA(Pro) + L-proline + ATP = L-prolyl-tRNA(Pro) + AMP + diphosphate. Catalyzes the attachment of proline to tRNA(Pro) in a two-step reaction: proline is first activated by ATP to form Pro-AMP and then transferred to the acceptor end of tRNA(Pro). This Cenarchaeum symbiosum (strain A) protein is Proline--tRNA ligase.